We begin with the raw amino-acid sequence, 251 residues long: Imidazole glycerol phosphate synthase subunit HisF (251 aa).

Residues Asp-13 and Asp-132 contribute to the active site.

Belongs to the HisA/HisF family. As to quaternary structure, heterodimer of HisH and HisF.

The protein localises to the cytoplasm. It catalyses the reaction 5-[(5-phospho-1-deoxy-D-ribulos-1-ylimino)methylamino]-1-(5-phospho-beta-D-ribosyl)imidazole-4-carboxamide + L-glutamine = D-erythro-1-(imidazol-4-yl)glycerol 3-phosphate + 5-amino-1-(5-phospho-beta-D-ribosyl)imidazole-4-carboxamide + L-glutamate + H(+). It functions in the pathway amino-acid biosynthesis; L-histidine biosynthesis; L-histidine from 5-phospho-alpha-D-ribose 1-diphosphate: step 5/9. IGPS catalyzes the conversion of PRFAR and glutamine to IGP, AICAR and glutamate. The HisF subunit catalyzes the cyclization activity that produces IGP and AICAR from PRFAR using the ammonia provided by the HisH subunit. This Campylobacter concisus (strain 13826) protein is Imidazole glycerol phosphate synthase subunit HisF.